Consider the following 1665-residue polypeptide: Protein scribble homolog (1665 aa).

The tract at residues 1–804 (MLKCIPLWRC…MRVWRERMVE (804 aa)) is sufficient for targeting to adherens junction and to inhibit cell proliferation. S37 carries the phosphoserine modification. LRR repeat units lie at residues 37–58 (SLEELLLDANQLRELPKPFFRL), 60–81 (NLRKLGLSDNEIQRLPPEVANF), 83–104 (QLVELDVSRNDIPEIPESIKFC), 106–127 (ALEIADFSGNPLSRLPDGFTQL), 129–150 (SLAHLALNDVSLQALPGDVGNL), 152–174 (NLVTLELRENLLKSLPASLSFLV), 175–197 (KLEQLDLGGNDLEVLPDTLGALP), 198–219 (NLRELWLDRNQLSALPPELGNL), 221–243 (RLVCLDVSENRLEELPVELGGLA), 244–265 (LLTDLLLSQNLLQRLPEGIGQL), 267–288 (QLSILKVDQNRLCEVTEAIGDC), 290–312 (NLSELILTENLLTALPHSLGKLT), 313–334 (KLTNLNVDRNHLEVLPPEIGGC), 336–357 (ALSVLSLRDNRLAVLPPELAHT), 359–381 (ELHVLDVAGNRLRSLPFALTHLN), and 382–402 (LKALWLAENQAQPMLRFQTED). T378 carries the post-translational modification Phosphothreonine. Disordered regions lie at residues 422-615 (PSLE…HFKI) and 635-689 (REGP…SAPS). The span at 428–437 (GQQSSPSESC) shows a compositional bias: polar residues. Residues 452–463 (DTLEGEEDAEEA) show a composition bias toward acidic residues. A coiled-coil region spans residues 455-475 (EGEEDAEEAAAEKRGLQRRAT). Residue T475 is modified to Phosphothreonine. Composition is skewed to basic and acidic residues over residues 479 to 494 (SELKVMKRGIEERRNE) and 570 to 580 (FAEDTLIPRED). The residue at position 583 (S583) is a Phosphoserine. Positions 653 to 687 (RAHEEEEEEEEENRDEEEGEATTEEDDKEEAVASA) form a coiled coil. Positions 657–681 (EEEEEEEENRDEEEGEATTEEDDKE) are enriched in acidic residues. Residues T674 and T675 each carry the phosphothreonine modification. Phosphoserine is present on residues S694 and S750. The interaction with ARHGEF7 stretch occupies residues 703–1215 (IEPARIEEEE…SLESISSIDR (513 aa)). A PDZ 1 domain is found at 714–801 (TLTIVRQTGG…AVQMRVWRER (88 aa)). A required for interaction with VIM region spans residues 714–1180 (TLTIVRQTGG…TVLVCDGFDT (467 aa)). At T812 the chain carries Phosphothreonine. A phosphoserine mark is found at S821, S861, and S925. PDZ domains follow at residues 848–936 (AACL…ERET), 990–1079 (EICL…RRDP), and 1086–1180 (ELCI…GFDT). 8 positions are modified to phosphoserine: S1126, S1206, S1209, S1212, S1218, S1262, S1265, and S1284. Residues 1213–1228 (IDRELSPEGPGKEKEL) are compositionally biased toward basic and acidic residues. Positions 1213–1246 (IDRELSPEGPGKEKELASQALPWESESAETTGRN) are disordered. Disordered stretches follow at residues 1263–1325 (AGSL…DELP) and 1341–1501 (VHPP…AERR). Positions 1264–1277 (GSLQRGPSATTGGK) are enriched in polar residues. K1291 is modified (omega-N-methylarginine). A1299 is modified (phosphoserine). R1312 bears the Omega-N-methylarginine mark. A Phosphoserine modification is found at S1320. T1353 is modified (phosphothreonine). The residue at position 1359 (S1359) is a Phosphoserine. Basic and acidic residues predominate over residues 1364–1376 (SFRERQKYFELEV). At S1389 the chain carries Phosphoserine. Residues 1390 to 1421 (LVGADDLRKMQEEEARKLQQKRAQMLREEAVT) are a coiled coil. Residues 1394 to 1406 (DDLRKMQEEEARK) are compositionally biased toward basic and acidic residues. S1455 and S1458 each carry phosphoserine. Residues 1471–1482 (AKAERRHQERLR) are compositionally biased toward basic and acidic residues. 3 positions are modified to phosphoserine: S1485, S1496, and S1518. A disordered region spans residues 1530 to 1577 (LSKSQEGRGKRGPLERLAEAPSPAPTPSPTPLEDFGLQTSASPGRLPL). The span at 1534-1547 (QEGRGKRGPLERLA) shows a compositional bias: basic and acidic residues. S1551 bears the Phosphoserine mark. Residue T1555 is modified to Phosphothreonine. A phosphoserine mark is found at S1557, S1571, and S1601. Residues 1632–1665 (GRPSPGAVGPEDMTLCSSRRSVRPGRRGLGPVPS) are disordered.

It belongs to the LAP (LRR and PDZ) protein family. As to quaternary structure, interacts with UBE3A. Interacts with PAK1 and PAK2. Interacts (via PDZ domains) with VANGL2. Interacts (via PDZ domains) with LPP and TRIP6; the interaction is direct. Interacts (via PDZ domains) with TJP2. Interacts (via PDZ domains) with APC; may mediate APC targeting to adherens junctions of epithelial cells. Interacts (via PDZ domains) with TSHR; regulates TSHR trafficking and function. Interacts with ARHGEF7 and GIT1; interacts directly with ARHGEF7. Interacts with CTNNB1. Interacts with MAPK12. Interacts (via PDZ domains 1 and 3) with MCC. Interacts with DLG5. Interacts with STK4/MST1 and LATS1 in the presence of DLG5. Interacts (via PDZ domain 3) with CRTAM (via PDZ-binding motif); the interaction promotes CRTAM and SCRIB polarization in a subset of CD4+ T-cells. Interacts with YES1, when YES1 is in a closed conformation; the interaction facilitates YES1 autophosphorylation. Interacts (via PDZ domains) with VIM; the interaction protects SCRIB from proteasomal degradation and facilitates SCRIB localization to intermediate filaments, the interaction is reduced by cell contact inhibition. Post-translationally, ubiquitinated; targeted for UBE3A-dependent multiubiquitination and degraded. In terms of processing, palmitoylated. Could be depalmitoylated by LYPLA1 and/or LYPLA2. Palmitoylation of SCRIB by ZDHHC7 is required for its localization to cell-cell junctions, function in the establishement of epithelial cell polarity and the regulation of downstream signaling pathways important for epithelial cell differentiation. In terms of tissue distribution, expressed in CD4+ T-cells (at protein level). Found in a wide range of tissues including liver, kidney and spleen. Also expressed in the brain (at protein level).

The protein resides in the cell membrane. The protein localises to the cell junction. Its subcellular location is the adherens junction. It is found in the cell projection. It localises to the lamellipodium. The protein resides in the cytoplasm. The protein localises to the postsynapse. Its subcellular location is the presynapse. Scaffold protein involved in different aspects of polarized cell differentiation regulating epithelial and neuronal morphogenesis and T-cell polarization. Via its interaction with CRTAM, required for the late phase polarization of a subset of CD4+ T-cells, which in turn regulates TCR-mediated proliferation and IFNG and IL22 production. Plays a role in cell directional movement, cell orientation, cell sheet organization and Golgi complex polarization at the cell migration front. Promotes epithelial cell layer barrier function via maintaining cell-cell adhesion. Most probably functions in the establishment of apico-basal cell polarity. May function in cell proliferation regulating progression from G1 to S phase and as a positive regulator of apoptosis for instance during acinar morphogenesis of the mammary epithelium. May regulate cell invasion via MAPK-mediated cell migration and adhesion. May play a role in exocytosis and in the targeting of synaptic vesicles to synapses. Functions as an activator of Rac GTPase activity. This is Protein scribble homolog from Mus musculus (Mouse).